The following is a 296-amino-acid chain: Protease HtpX homolog (296 aa).

Transmembrane regions (helical) follow at residues 14-34 (VVLLIVFFCLLAAIGAAVGYL) and 39-59 (YQFGLVLALIIGVIYAVSMIF). His-143 contacts Zn(2+). Glu-144 is a catalytic residue. His-147 contacts Zn(2+). 2 consecutive transmembrane segments (helical) span residues 158–178 (IAVALASAVTLISSIGSRMLF) and 195–215 (ILVLIFSILSLILAPLAASLV). Glu-224 serves as a coordination point for Zn(2+).

This sequence belongs to the peptidase M48B family. Zn(2+) serves as cofactor.

The protein resides in the cell membrane. The sequence is that of Protease HtpX homolog from Streptococcus agalactiae serotype Ia (strain ATCC 27591 / A909 / CDC SS700).